The sequence spans 257 residues: NAD-capped RNA hydrolase NudC (257 aa).

Residue Arg-69 coordinates substrate. Residues Cys-98 and Cys-101 each coordinate Zn(2+). Glu-111 is a binding site for substrate. Residues Cys-116 and Cys-119 each coordinate Zn(2+). Tyr-124 lines the substrate pocket. In terms of domain architecture, Nudix hydrolase spans Pro-125–Thr-248. Residues Ala-158, Glu-174, and Glu-178 each contribute to the a divalent metal cation site. The Nudix box signature appears at Gly-159–Gly-180. Substrate is bound at residue Gln-192–Ser-199. Glu-219 lines the a divalent metal cation pocket. Residue Ala-241 participates in substrate binding.

The protein belongs to the Nudix hydrolase family. NudC subfamily. Homodimer. The cofactor is Mg(2+). It depends on Mn(2+) as a cofactor. Requires Zn(2+) as cofactor.

The enzyme catalyses a 5'-end NAD(+)-phospho-ribonucleoside in mRNA + H2O = a 5'-end phospho-adenosine-phospho-ribonucleoside in mRNA + beta-nicotinamide D-ribonucleotide + 2 H(+). The catalysed reaction is NAD(+) + H2O = beta-nicotinamide D-ribonucleotide + AMP + 2 H(+). It catalyses the reaction NADH + H2O = reduced beta-nicotinamide D-ribonucleotide + AMP + 2 H(+). MRNA decapping enzyme that specifically removes the nicotinamide adenine dinucleotide (NAD) cap from a subset of mRNAs by hydrolyzing the diphosphate linkage to produce nicotinamide mononucleotide (NMN) and 5' monophosphate mRNA. The NAD-cap is present at the 5'-end of some mRNAs and stabilizes RNA against 5'-processing. Has preference for mRNAs with a 5'-end purine. Catalyzes the hydrolysis of a broad range of dinucleotide pyrophosphates. This chain is NAD-capped RNA hydrolase NudC, found in Klebsiella pneumoniae (strain 342).